Here is a 208-residue protein sequence, read N- to C-terminus: Calcyphosin-like protein (208 aa).

EF-hand domains follow at residues alanine 39 to valine 74, methionine 75 to arginine 110, alanine 111 to proline 146, and threonine 154 to serine 191. Residues aspartate 52, asparagine 54, asparagine 56, threonine 58, glutamate 63, aspartate 88, aspartate 90, serine 92, threonine 94, and glutamate 99 each coordinate Ca(2+).

It is found in the cytoplasm. The chain is Calcyphosin-like protein (Capsl) from Mus musculus (Mouse).